We begin with the raw amino-acid sequence, 262 residues long: Small ribosomal subunit protein eS1 (262 aa).

The protein belongs to the eukaryotic ribosomal protein eS1 family. In terms of assembly, component of the small ribosomal subunit. Mature ribosomes consist of a small (40S) and a large (60S) subunit. The 40S subunit contains about 33 different proteins and 1 molecule of RNA (18S). The 60S subunit contains about 49 different proteins and 3 molecules of RNA (25S, 5.8S and 5S).

Its subcellular location is the cytoplasm. In Cryptosporidium hominis, this protein is Small ribosomal subunit protein eS1.